The primary structure comprises 296 residues: Phosphoribosylaminoimidazole-succinocarboxamide synthase (296 aa).

This sequence belongs to the SAICAR synthetase family.

It catalyses the reaction 5-amino-1-(5-phospho-D-ribosyl)imidazole-4-carboxylate + L-aspartate + ATP = (2S)-2-[5-amino-1-(5-phospho-beta-D-ribosyl)imidazole-4-carboxamido]succinate + ADP + phosphate + 2 H(+). It participates in purine metabolism; IMP biosynthesis via de novo pathway; 5-amino-1-(5-phospho-D-ribosyl)imidazole-4-carboxamide from 5-amino-1-(5-phospho-D-ribosyl)imidazole-4-carboxylate: step 1/2. This is Phosphoribosylaminoimidazole-succinocarboxamide synthase from Thioalkalivibrio sulfidiphilus (strain HL-EbGR7).